The chain runs to 453 residues: MGVKTFTHSSSSHSQEMLGKLNMLRNDGHFCDITIRVQDKIFRAHKVVLAACSDFFRTKLVGQTEDENKNVLDLHHVTVTGFIPLLEYAYTATLSINTENIIDVLAAASYMQMFSVASTCSEFMKSSILWNTPNSQPEKSLDAGQENSSNCNFTSRDGSISPVSSECSAVERTIPVCRESRRKRKSYIVMSPESPVKCSTQTSSPQVLNSSASYAENRSQPVDSSLAFPWTFPFGIDRRIQPEKAKQAENTRTLELPGPSEAGRRVADYVTCESTKPTLPLGTEEDVRVKVERLSDEEVHEEVSQPVSASQSSLSDQQTVPGSEPVQEDLLISPQSSSIGSVDEGVTEGLPTLQSTSSTNAHADDDDRLENVQYPYQLYIAPSTSSTERPSPNGPDRPFQCPTCGVRFTRIQNLKQHMLIHSGIKPFQCDCCGKKFTRAYSLKMHRLKHEVIS.

Lys-4 participates in a covalent cross-link: Glycyl lysine isopeptide (Lys-Gly) (interchain with G-Cter in SUMO2). The BTB domain occupies 31–98 (CDITIRVQDK…AYTATLSINT (68 aa)). Ser-135 is modified (phosphoserine). The disordered stretch occupies residues 135–157 (SQPEKSLDAGQENSSNCNFTSRD). The segment covering 145 to 157 (QENSSNCNFTSRD) has biased composition (polar residues). Phosphoserine occurs at positions 159, 161, 165, 191, 194, and 199. Position 200 is a phosphothreonine (Thr-200). The disordered stretch occupies residues 241–266 (QPEKAKQAENTRTLELPGPSEAGRRV). A Glycyl lysine isopeptide (Lys-Gly) (interchain with G-Cter in SUMO2) cross-link involves residue Lys-290. 2 disordered regions span residues 295 to 324 (SDEEVHEEVSQPVSASQSSLSDQQTVPGSE) and 336 to 366 (SSSIGSVDEGVTEGLPTLQSTSSTNAHADDD). Residues 304-318 (SQPVSASQSSLSDQQ) are compositionally biased toward low complexity. Over residues 352–361 (TLQSTSSTNA) the composition is skewed to polar residues. 2 consecutive C2H2-type zinc fingers follow at residues 399 to 421 (FQCPTCGVRFTRIQNLKQHMLIH) and 427 to 449 (FQCDCCGKKFTRAYSLKMHRLKH).

It localises to the nucleus. This Mus musculus (Mouse) protein is Zinc finger and BTB domain-containing protein 44 (Zbtb44).